Reading from the N-terminus, the 194-residue chain is MQIALLLLIAYLLGAIPTGLIVGKLFFNKDIRKFGSGNLGATNTFRVLGKKAGIFVTIFDVAKGVLPAIFPIIYDLDIHGIWFGLAAIIGHVYPIYLNFKGGKAVATSAGVILGVNPVVFLIIAVIFFTLLFTTRMVSLTSILTSIGNFITTLFFDDIILQIISFLIMLLIIIRHSSNIKRIISGTEPKIQFKK.

The next 5 helical transmembrane spans lie at I3 to G23, V47 to P67, I78 to L97, I112 to F132, and L153 to I173.

It belongs to the PlsY family. In terms of assembly, probably interacts with PlsX.

The protein resides in the cell membrane. It catalyses the reaction an acyl phosphate + sn-glycerol 3-phosphate = a 1-acyl-sn-glycero-3-phosphate + phosphate. The protein operates within lipid metabolism; phospholipid metabolism. In terms of biological role, catalyzes the transfer of an acyl group from acyl-phosphate (acyl-PO(4)) to glycerol-3-phosphate (G3P) to form lysophosphatidic acid (LPA). This enzyme utilizes acyl-phosphate as fatty acyl donor, but not acyl-CoA or acyl-ACP. The polypeptide is Glycerol-3-phosphate acyltransferase (Macrococcus caseolyticus (strain JCSC5402) (Macrococcoides caseolyticum)).